A 628-amino-acid polypeptide reads, in one-letter code: Probable potassium transport system protein Kup 1 (628 aa).

Helical transmembrane passes span 18 to 38 (ITLAALGVVYGDLGTSPLYAL), 58 to 78 (IVSLFFWTIMIVVSFKYVLLV), 106 to 126 (ALLMLLGLVGVGLFIGDAVIT), 141 to 161 (ITPELAPFVLPITLTVLVILF), 175 to 195 (FGPIMLLWFGVLAALGAYEIV), 219 to 239 (IAFITLGAVVLCVTGTEALYA), 253 to 273 (WGSLVMPALLLNYFGQGALLL), 285 to 305 (LLAPSWLAFPLLILATLATVI), 343 to 363 (IYLPLVNWLLLGGIIIVIIWF), 371 to 391 (AAYGIAVTGTMALTTLLLMVV), 401 to 421 (WLIALICAPLLLVDVTFFAAN), and 425 to 445 (FLAGGWLPILFALLAIIVMTT).

The protein belongs to the HAK/KUP transporter (TC 2.A.72) family.

It localises to the cell inner membrane. It catalyses the reaction K(+)(in) + H(+)(in) = K(+)(out) + H(+)(out). In terms of biological role, transport of potassium into the cell. Likely operates as a K(+):H(+) symporter. The polypeptide is Probable potassium transport system protein Kup 1 (Aeromonas hydrophila subsp. hydrophila (strain ATCC 7966 / DSM 30187 / BCRC 13018 / CCUG 14551 / JCM 1027 / KCTC 2358 / NCIMB 9240 / NCTC 8049)).